We begin with the raw amino-acid sequence, 492 residues long: MAVLLETTLGDVVIDLYTEERPRACLNFLKLCKIKYYNYCLIHNVQRDFIIQTGDPTGTGRGGESIFGQLYGDQASFFEAEKVPRIKHKKKGTVSMVNNGSDQHGSQFLITTGENLDYLDGVHTVFGEVTEGMDIVKKINETFVDKDFVPYQDIRINHTVILDDPFDDPPDLLIPDRSPEPTKEQLDSGRIGADEEIDDFKGRSAEEVEEIKAEKEAKTQAILLEMVGDLPDADIKPPENVLFVCKLNPVTTDEDLEIIFSRFGPIRSCEVIRDWKTGESLCYAFIEFEKEEDCEKAFFKMDNVLIDDRRIHVDFSQSVAKVKWKGKGGKYTKSDFKEYEKEQDKPANLVLKEKVKPKQDAKYDLILDEQGEDSKSSHSHTSKKHKKKTRHCSEEKEDEEYMPIKNPNQDIYREMGFGHYEEEESCWEKQKNEKRDRRQNRSRSRSRERDGHYSNSHKPKYQTEPYERERSRKRDRSRSPKKSKAKEKSKYR.

A PPIase cyclophilin-type domain is found at M1–I161. Positions D167–S188 are disordered. The segment covering R177–D187 has biased composition (basic and acidic residues). A Phosphoserine modification is found at S178. T182 bears the Phosphothreonine mark. Residues K201, K212, and K218 each participate in a glycyl lysine isopeptide (Lys-Gly) (interchain with G-Cter in SUMO2) cross-link. The RRM domain maps to N240–S318. Glycyl lysine isopeptide (Lys-Gly) (interchain with G-Cter in SUMO2) cross-links involve residues K321 and K362. 2 disordered regions span residues D368–Q409 and E423–R492. Residues S377–R390 show a composition bias toward basic residues. S393 carries the post-translational modification Phosphoserine. K405 participates in a covalent cross-link: Glycyl lysine isopeptide (Lys-Gly) (interchain with G-Cter in SUMO2). Residues C426–D436 show a composition bias toward basic and acidic residues. K460 is covalently cross-linked (Glycyl lysine isopeptide (Lys-Gly) (interchain with G-Cter in SUMO2)). Phosphoserine is present on S471. Residues K473–A485 show a composition bias toward basic residues.

The protein belongs to the cyclophilin-type PPIase family. PPIL4 subfamily.

The protein resides in the nucleus. The catalysed reaction is [protein]-peptidylproline (omega=180) = [protein]-peptidylproline (omega=0). In terms of biological role, PPIases accelerate the folding of proteins. It catalyzes the cis-trans isomerization of proline imidic peptide bonds in oligopeptides. The polypeptide is Peptidyl-prolyl cis-trans isomerase-like 4 (Ppil4) (Mus musculus (Mouse)).